Consider the following 1161-residue polypeptide: DNA-directed RNA polymerase III subunit 2 (1161 aa).

The segment at 1104–1125 (CRACGLLGYYNYKLKKAVCTTC) adopts a C4-type zinc-finger fold.

It belongs to the RNA polymerase beta chain family. In terms of assembly, component of the RNA polymerase III (Pol III) complex consisting of 17 subunits.

The protein resides in the nucleus. It carries out the reaction RNA(n) + a ribonucleoside 5'-triphosphate = RNA(n+1) + diphosphate. In terms of biological role, DNA-dependent RNA polymerase catalyzes the transcription of DNA into RNA using the four ribonucleoside triphosphates as substrates. Second largest core component of RNA polymerase III which synthesizes small RNAs, such as 5S rRNA and tRNAs. Proposed to contribute to the polymerase catalytic activity and forms the polymerase active center together with the largest subunit. Pol III is composed of mobile elements and NRPC2 is part of the core element with the central large cleft and probably a clamp element that moves to open and close the cleft. Functionally, essential for the completion of the three rounds of mitosis in female megaspores required for the development of mature gametophytes. This Arabidopsis thaliana (Mouse-ear cress) protein is DNA-directed RNA polymerase III subunit 2.